Reading from the N-terminus, the 577-residue chain is Moesin (577 aa).

An FERM domain is found at 2–295 (PKTISVRVTT…GNHELYMRRR (294 aa)). At Ser74 the chain carries Phosphoserine. Lys79 is modified (N6-acetyllysine). Residue Lys83 is modified to N6-succinyllysine. Positions 115–120 (IYCPPE) match the [IL]-x-C-x-x-[DE] motif motif. The residue at position 116 (Tyr116) is a Phosphotyrosine. At Cys117 the chain carries S-nitrosocysteine. N6-acetyllysine occurs at positions 139 and 165. Disordered regions lie at residues 322–342 (LLENEKKKRELAEKEKEKIER), 358–419 (TKKA…QLAS), and 468–518 (STPH…NERV). A compositionally biased stretch (basic and acidic residues) spans 358 to 401 (TKKAQQELEEQTRRALELEQERKRAQSEAEKLAKERQEAEEAKE). Ser407 is subject to Phosphoserine. Over residues 492-518 (AELRADAMAKDRSEEERTTEAEKNERV) the composition is skewed to basic and acidic residues. Ser527 carries the phosphoserine modification. Thr558 carries the post-translational modification Phosphothreonine; by ROCK2 and STK10.

In resting T-cells, part of a PAG1-NHERF1-MSN complex which is disrupted upon TCR activation. Interacts with NHERF1. Interacts with PPP1R16B. Interacts with SELPLG and SYK; these interactions mediate the activation of SYK by SELPLG. Interacts with PDPN (via cytoplasmic domain); this interaction activates RHOA and promotes epithelial-mesenchymal transition. Interacts with SPN/CD43 cytoplasmic tail. Interacts with CD44. Interacts with ICAM2. Interacts with ICAM3 (via C-terminus). Interacts with PDZD8. Interacts with F-actin. Interacts with CD46. Interacts with PTPN6. In terms of processing, phosphorylation on Thr-558 by STK10 negatively regulates lymphocyte migration and polarization. Phosphorylation on Thr-558 is crucial for the formation of microvilli-like structures. Phosphorylation by ROCK2 suppresses the head-to-tail association of the N-terminal and C-terminal halves resulting in an opened conformation which is capable of actin and membrane-binding. S-nitrosylation of Cys-117 is induced by interferon-gamma and oxidatively-modified low-densitity lipoprotein (LDL(ox)) implicating the iNOS-S100A8/9 transnitrosylase complex.

It is found in the cell membrane. Its subcellular location is the cytoplasm. The protein resides in the cytoskeleton. The protein localises to the apical cell membrane. It localises to the cell projection. It is found in the microvillus membrane. Its subcellular location is the microvillus. Functionally, ezrin-radixin-moesin (ERM) family protein that connects the actin cytoskeleton to the plasma membrane and thereby regulates the structure and function of specific domains of the cell cortex. Tethers actin filaments by oscillating between a resting and an activated state providing transient interactions between moesin and the actin cytoskeleton. Once phosphorylated on its C-terminal threonine, moesin is activated leading to interaction with F-actin and cytoskeletal rearrangement. These rearrangements regulate many cellular processes, including cell shape determination, membrane transport, and signal transduction. The role of moesin is particularly important in immunity acting on both T and B-cells homeostasis and self-tolerance, regulating lymphocyte egress from lymphoid organs. Modulates phagolysosomal biogenesis in macrophages. Also participates in immunologic synapse formation. In Mus musculus (Mouse), this protein is Moesin.